A 521-amino-acid polypeptide reads, in one-letter code: MIKQALISVSDKTGIVDFAKALSGLGVKLLSTGGTAKLLADAGLPVTEVADYTGFPEMLDGRVKTLHPKVHGGILARRDLPEHMQALEAHGIPTIDLLVVNLYPFVQTIAKDDCTLADAIENIDIGGPTMLRSAAKNHRDVTVVVDPADYAVVLDEMKANGNTVGYKTNFRLATKVFAHTAQYDGAITNYLTSLGDDLQHGSRNAYPATLNLAFDKVQDLRYGENPHQSAAFYRDVATPAGALANYRQLQGKELSYNNIADSDAAWECVKTFDAPACVIIKHANPCGVAVGADAGEAYAKAFQTDPTSAFGGIIAFNREVDEVAAQAVAKQFVEVLIAPSFSEAAKQVFAAKQNVRLLEIALGEGHNAFDLKRVGGGLLVQSLDSKNVQPRELRVVTKRHPTPKEMDDLLFAWRVAKYVKSNAIVFCGNGMTLGVGAGQMSRVDSARIASIKAQNAGLTLAGSAVASDAFFPFRDGLDVVVAAGATCVIQPGGSVRDDEVIAAADEHNIAMVMTGVRHFRH.

Residues 1–145 (MIKQALISVS…KNHRDVTVVV (145 aa)) enclose the MGS-like domain.

Belongs to the PurH family.

It carries out the reaction (6R)-10-formyltetrahydrofolate + 5-amino-1-(5-phospho-beta-D-ribosyl)imidazole-4-carboxamide = 5-formamido-1-(5-phospho-D-ribosyl)imidazole-4-carboxamide + (6S)-5,6,7,8-tetrahydrofolate. The enzyme catalyses IMP + H2O = 5-formamido-1-(5-phospho-D-ribosyl)imidazole-4-carboxamide. Its pathway is purine metabolism; IMP biosynthesis via de novo pathway; 5-formamido-1-(5-phospho-D-ribosyl)imidazole-4-carboxamide from 5-amino-1-(5-phospho-D-ribosyl)imidazole-4-carboxamide (10-formyl THF route): step 1/1. It participates in purine metabolism; IMP biosynthesis via de novo pathway; IMP from 5-formamido-1-(5-phospho-D-ribosyl)imidazole-4-carboxamide: step 1/1. The chain is Bifunctional purine biosynthesis protein PurH from Burkholderia thailandensis (strain ATCC 700388 / DSM 13276 / CCUG 48851 / CIP 106301 / E264).